We begin with the raw amino-acid sequence, 263 residues long: Undecaprenyl-diphosphatase 2 (263 aa).

A run of 8 helical transmembrane segments spans residues 15–37, 42–62, 79–99, 107–127, 142–162, 183–203, 216–236, and 242–262; these read GLTE…LIGF, AKVF…VIFW, SLNL…GVLF, LFGP…MIVA, ITYK…WPGF, AEYT…LDLI, LFVT…VSFL, and VKLT…YFFI.

This sequence belongs to the UppP family.

It is found in the cell membrane. The enzyme catalyses di-trans,octa-cis-undecaprenyl diphosphate + H2O = di-trans,octa-cis-undecaprenyl phosphate + phosphate + H(+). Functionally, catalyzes the dephosphorylation of undecaprenyl diphosphate (UPP). Confers resistance to bacitracin. In Bacillus cereus (strain ATCC 14579 / DSM 31 / CCUG 7414 / JCM 2152 / NBRC 15305 / NCIMB 9373 / NCTC 2599 / NRRL B-3711), this protein is Undecaprenyl-diphosphatase 2.